Here is a 1733-residue protein sequence, read N- to C-terminus: ATP-binding cassette sub-family A member 17 (1733 aa).

Transmembrane regions (helical) follow at residues 22–42 (TLITLLEMLMPLLFCAIVLYL), 262–282 (FPLLLMLSFICVELIITNSVL), 306–326 (AWFITFFISVSITVSVMTVLF), 342–362 (TLIFIFLMCFAIATIFFAFMM), 372–392 (GTVIGGTVFFFTYLPYMYITF), 403–423 (ILSCLFSNVAMATGVRFISLF), and 444–464 (FAQVLGMLLLDSFLYCLIAFL). In terms of domain architecture, ABC transporter 1 spans 519–752 (IEIQHLYKVF…YGAGYYMTII (234 aa)). 555-562 (GHNGAGKT) lines the ATP pocket. Asn-609 is a glycosylation site (N-linked (GlcNAc...) asparagine). Helical transmembrane passes span 906 to 926 (LVLSVQVLLPLAIIMLSLTFF), 1082 to 1102 (LVVNFLFGIAFLSSSFSILTV), 1128 to 1148 (LLWDLISFLVPTLLLVLVFLW), 1160 to 1180 (IPAVVLIMMLYGWAVIPLVYT), 1192 to 1212 (CVKLVVMLTFLSISPVVLVTV), 1230 to 1250 (IFLILPGHCLGMALSNLYYNF), and 1287 to 1307 (IGKYLTALAVLGPVYITMLFL). Residues 1366–1599 (LVVKEVSKVY…FGISYSLQAK (234 aa)) form the ABC transporter 2 domain. An ATP-binding site is contributed by 1401 to 1408 (GLNGAGKT). Over residues 1681–1692 (ESSTKEQIQQEQ) the composition is skewed to polar residues. The disordered stretch occupies residues 1681 to 1733 (ESSTKEQIQQEQAVLASPSPPSNSRPISSPPSRLSSPTPKPLPSPPPSEPILL). The segment covering 1704-1717 (SRPISSPPSRLSSP) has biased composition (low complexity). The span at 1718–1733 (TPKPLPSPPPSEPILL) shows a compositional bias: pro residues.

This sequence belongs to the ABC transporter superfamily. ABCA family. N-glycosylated. As to expression, in the testis, detected predominantly in elongated spermatids at the late stage of germ cell development and in sperm, with no expression detected in immature germ cells such as spermatogonia and spermatocytes or in somatic cells such as Sertoli cells (at protein level). Expressed in the head and tail midpiece of elongated spermatids and sperm (at protein level). Expressed exclusively in the testis.

The protein resides in the endoplasmic reticulum membrane. Its subcellular location is the cytoplasm. It carries out the reaction cholesterol(in) + ATP + H2O = cholesterol(out) + ADP + phosphate + H(+). Functionally, promotes cholesterol efflux from sperm which renders sperm capable of fertilization. Has also been shown to decrease levels of intracellular esterified neutral lipids including cholesteryl esters, fatty acid esters and triacylglycerols. This is ATP-binding cassette sub-family A member 17 from Mus musculus (Mouse).